A 314-amino-acid polypeptide reads, in one-letter code: Formimidoylglutamase (314 aa).

Residues H127, D153, H155, D157, D245, and D247 each coordinate Mn(2+).

It belongs to the arginase family. It depends on Mn(2+) as a cofactor.

It carries out the reaction N-formimidoyl-L-glutamate + H2O = formamide + L-glutamate. Its pathway is amino-acid degradation; L-histidine degradation into L-glutamate; L-glutamate from N-formimidoyl-L-glutamate (hydrolase route): step 1/1. Catalyzes the conversion of N-formimidoyl-L-glutamate to L-glutamate and formamide. This chain is Formimidoylglutamase, found in Aeromonas salmonicida (strain A449).